We begin with the raw amino-acid sequence, 599 residues long: MAFLKARLAALLSVAVSCSAVLYDDAKKLPSTSYDYIVVGGGTAGSVLANRLTEDAKTQVLVLEGGPSGQGVLELEIPFYNLYGPHDPLWNWNISVLPQDTAADRVLVYPAGRVLGGTSMINGMYYSRGPSSDWDRMAAITGDSGWSWDKIYPYFIKSEVLTPSVGGRNTTGELDPSIHGKQGIVATSSPNWSYETDPLIISALNELGGPYSPILDFNNGSPLGVAWFQYTMRNGSREDAATSYFADKFLGRSNLHVLVNATVDRVVQSKSGGPVNGVEYHLSNGTGSTLHATANKEVIVSAGTFGTPHLLLNSGIGDNSTLASYNVTPIAHVPDVGKNLTDYSTVILTWSVNSTTTLYDLITKNETFANDSLAQWTASHTGPFSNGVSNHMFNLRLNETDPEVQQMLKQYGDPSSSDKAPHITLQFVEGGLGSGNSISMENFVVTPLSRGSVTLNTTDPSGPPVVDAGILTSPFDVFVLEQGILAARKFLSASAWDNYIIAPASGLDAGIPVDGSVNTTALESYIRTQATAGWRETGTAKMSPKGARWGVVDPDFRVKNVQGLRVVDASVFPEIPSLHTQIPIYAIAERAADLIKGSH.

A signal peptide spans 1-20 (MAFLKARLAALLSVAVSCSA). Residues 43–44 (TA) and 64–65 (EG) contribute to the FAD site. Asparagine 93 carries N-linked (GlcNAc...) asparagine glycosylation. 122-125 (NGMY) lines the FAD pocket. 13 N-linked (GlcNAc...) asparagine glycosylation sites follow: asparagine 169, asparagine 191, asparagine 234, asparagine 260, asparagine 284, asparagine 319, asparagine 339, asparagine 353, asparagine 365, asparagine 370, asparagine 398, asparagine 456, and asparagine 518. Residues alanine 569 and 580-581 (TQ) contribute to the FAD site.

It belongs to the GMC oxidoreductase family. As to quaternary structure, homodimer. Requires FAD as cofactor.

In terms of biological role, dehydrogenase; part of the gene cluster that mediates the biosynthesis of erinacines, cyathane-xylosides that show unique biological activities, including leishmanicidal activity, stimulating activity for nerve growth-factor synthesis, and agonistic activity toward the kappa opioid receptor. The role of the dehydrogenase eriK within the pathway has still to be determined. The first step of the erinacines biosynthesis pathway is catalyzed by the geranylgeranyl diphosphate (GGPP) synthase eriE via conversion of farnesyl pyrophosphate and isopentyl pyrophosphate into geranylgeranyl pyrophosphate (GGPP). GGPP is then substrate of the diterpene cyclase eriG for the production of cyatha-3,12-diene. The cytochrome P450 monooxygenase eriI then hydroxylates cyatha-3,12-diene at C-14 of the seven-membered ring to produce erinacol, which is further hydroxylated at C-15 by the cytochrome P450 monooxygenase eriC to yield cyathadiol. The cytochrome P450 monooxygenase eriA then catalyzes C-11 hydroxylation in the presence of the short chain dehydrogenase/reductase (SDR) eriH, which leads to the production of cyathatriol. The acetyltransferase eriL converts cyathatriol into 11-O-acetyl-cyathatriol. The SDR eriH catalyzes further oxidation of 11-O-acetyl-cyathatriol into 1-O-acetylcyathin A3. Finally, the glycosyl transferase eriJ tranfers xylose from UDP-xylose onto C-14 of 11-O-acetyl-cyathatriol to form eracine Q. EriJ is also able to convert 11-O-acetyl-cyathatriol to eracine Q2 by using UDP-D-glucose as cosubstrate, but at a lower rate. The protein is Dehydrogenase eriK of Hericium erinaceus (Lion's mane mushroom).